The sequence spans 386 residues: S-adenosylmethionine synthase (386 aa).

His16 contributes to the ATP binding site. Asp18 is a binding site for Mg(2+). A K(+)-binding site is contributed by Glu44. Residues Glu57 and Gln100 each contribute to the L-methionine site. The interval 100-110 (QSRDITQGVDR) is flexible loop. Residues 165-167 (DAK), Asp240, 246-247 (RK), Ala263, and Lys267 each bind ATP. Asp240 is an L-methionine binding site. Lys271 lines the L-methionine pocket.

The protein belongs to the AdoMet synthase family. In terms of assembly, homotetramer; dimer of dimers. Requires Mg(2+) as cofactor. The cofactor is K(+).

It localises to the cytoplasm. The enzyme catalyses L-methionine + ATP + H2O = S-adenosyl-L-methionine + phosphate + diphosphate. It functions in the pathway amino-acid biosynthesis; S-adenosyl-L-methionine biosynthesis; S-adenosyl-L-methionine from L-methionine: step 1/1. Its function is as follows. Catalyzes the formation of S-adenosylmethionine (AdoMet) from methionine and ATP. The overall synthetic reaction is composed of two sequential steps, AdoMet formation and the subsequent tripolyphosphate hydrolysis which occurs prior to release of AdoMet from the enzyme. The polypeptide is S-adenosylmethionine synthase (Francisella tularensis subsp. tularensis (strain WY96-3418)).